We begin with the raw amino-acid sequence, 518 residues long: Membrane-bound lytic murein transglycosylase F (518 aa).

An N-terminal signal peptide occupies residues 1 to 21 (MKKLKINYLFIGILALLLAVA). The interval 22–269 (LWPSIPWFGK…RIEEKYLGHG (248 aa)) is non-LT domain. The segment at 270 to 518 (DDFDYVDTRT…SRKGSEEKQN (249 aa)) is LT domain. Glutamate 314 is an active-site residue.

In the N-terminal section; belongs to the bacterial solute-binding protein 3 family. The protein in the C-terminal section; belongs to the transglycosylase Slt family.

The protein resides in the cell outer membrane. The catalysed reaction is Exolytic cleavage of the (1-&gt;4)-beta-glycosidic linkage between N-acetylmuramic acid (MurNAc) and N-acetylglucosamine (GlcNAc) residues in peptidoglycan, from either the reducing or the non-reducing ends of the peptidoglycan chains, with concomitant formation of a 1,6-anhydrobond in the MurNAc residue.. Its function is as follows. Murein-degrading enzyme that degrades murein glycan strands and insoluble, high-molecular weight murein sacculi, with the concomitant formation of a 1,6-anhydromuramoyl product. Lytic transglycosylases (LTs) play an integral role in the metabolism of the peptidoglycan (PG) sacculus. Their lytic action creates space within the PG sacculus to allow for its expansion as well as for the insertion of various structures such as secretion systems and flagella. The chain is Membrane-bound lytic murein transglycosylase F from Escherichia coli O6:K15:H31 (strain 536 / UPEC).